The chain runs to 662 residues: MEGAPTVRQVMNEGDSSLATDLQEDVEENPSPTVEENNVVVKKQGPNLHNWSGDWSFWISSSTYKDRNEEYRRQFTHLPDTERLIADYACALQRDILLQGRLYLSENWLCFYSNIFRWETTISIALKNITFMTKEKTARLIPNAIQIVTESEKFFFTSFGARDRSYLSIFRLWQNVLLDKSLTRQEFWQLLQQNYGTELGLNAEEMENLSLSIEDVQPRSPGRSSLDDSGERDEKLSKSISFTSESISRVSETESFDGNSSKGGLGKEESQNEKQTKKSLLPTLEKKLTRVPSKSLDLNKNEYLSLDKSSTSDSVDEENVPEKDLHGRLFINRIFHISADRMFELLFTSSRFMQKFASSRNIIDVVSTPWTAELGGDQLRTMTYTIVLNSPLTGKCTAATEKQTLYKESREARFYLVDSEVLTHDVPYHDYFYTVNRYCIIRSSKQKCRLRVSTDLKYRKQPWGLVKSLIEKNSWSSLEDYFKQLESDLLIEESVLNQAIEDPGKLTGLRRRRRTFNRTAETVPKLSSQHSSGDVGLGAKGDITGKKKEMENYNVTLIVVMSIFVLLLVLLNVTLFLKLSKIEHAAQSFYRLRLQEEKSLNLASDMVSRAETIQKNKDQAHRLKGVLRDSIVMLEQLKSSLIMLQKTFDLLNKNKTGMAVES.

Residues 1 to 34 (MEGAPTVRQVMNEGDSSLATDLQEDVEENPSPTV) are disordered. One can recognise a GRAM domain in the interval 69-136 (EEYRRQFTHL…KNITFMTKEK (68 aa)). 2 disordered regions span residues 212-237 (SIEDVQPRSPGRSSLDDSGERDEKLS) and 249-284 (RVSETESFDGNSSKGGLGKEESQNEKQTKKSLLPTL). Positions 265–276 (LGKEESQNEKQT) are enriched in basic and acidic residues. Residues 326-497 (HGRLFINRIF…DLLIEESVLN (172 aa)) form the VASt domain. Residues 557–577 (LIVVMSIFVLLLVLLNVTLFL) form a helical membrane-spanning segment.

The protein resides in the endoplasmic reticulum membrane. It localises to the cell membrane. In terms of biological role, cholesterol transporter that mediates non-vesicular transport of cholesterol from the plasma membrane (PM) to the endoplasmic reticulum (ER). Contains unique domains for binding cholesterol and the PM, thereby serving as a molecular bridge for the transfer of cholesterol from the PM to the ER. Plays a crucial role in cholesterol homeostasis and has the unique ability to localize to the PM based on the level of membrane cholesterol. In lipid-poor conditions localizes to the ER membrane and in response to excess cholesterol in the PM is recruited to the endoplasmic reticulum-plasma membrane contact sites (EPCS) which is mediated by the GRAM domain. At the EPCS, the sterol-binding VASt/ASTER domain binds to the cholesterol in the PM and facilitates its transfer from the PM to ER. The chain is Protein Aster-C (GRAMD1C) from Homo sapiens (Human).